The primary structure comprises 304 residues: Peptidyl-prolyl cis-trans isomerase FKBP35 (304 aa).

The PPIase FKBP-type domain occupies 37-126 (GNEVTVHYVG…LFEIELLSFR (90 aa)). 3 TPR repeats span residues 144–177 (AFDIKEEGNEFFKKNEINEAIVKYKEALDFFIHT), 194–227 (ISCNLNLATCYNKNKDYPKAIDHASKVLKIDKNN), and 228–261 (VKALYKLGVANMYFGFLEEAKENLYKAASLNPNN).

The protein belongs to the FKBP-type PPIase family. Homodimer. Interacts (via TPR repeats) with HSP90 (probably via MEEVD motif).

The protein resides in the cytoplasm. It is found in the nucleus. It catalyses the reaction [protein]-peptidylproline (omega=180) = [protein]-peptidylproline (omega=0). With respect to regulation, inhibited by FK506 and its derivates, such as ascomycin, and rapamycin. FK506 and rapamycin inhibit peptidylprolyl isomerase activity but not chaperone activity. Inhibited by N-(2-ethyl-phenyl)-2-(3H-imidazao [4, 5-b] pyridin-2-yl-sulfanyl)-acetamide (D44). Not inhibited by cyclosporin A. Inhibition of calcineurin phosphatase activity is enhanced by FK506. Functionally, has peptidylprolyl isomerase (PPIase) and co-chaperone activities. Assists protein folding by catalyzing the peptidyl conversion of cis and trans rotamers of the prolyl amide bond of protein substrates. Inhibits calcineurin phosphatase activity in vitro. Plays an essential role in merozoite egress from host erythrocytes. In Plasmodium falciparum (isolate 3D7), this protein is Peptidyl-prolyl cis-trans isomerase FKBP35.